A 451-amino-acid chain; its full sequence is Methylenetetrahydrofolate--tRNA-(uracil-5-)-methyltransferase TrmFO (451 aa).

FAD is bound at residue 18–23 (GGGLAG).

This sequence belongs to the MnmG family. TrmFO subfamily. FAD serves as cofactor.

Its subcellular location is the cytoplasm. The catalysed reaction is uridine(54) in tRNA + (6R)-5,10-methylene-5,6,7,8-tetrahydrofolate + NADH + H(+) = 5-methyluridine(54) in tRNA + (6S)-5,6,7,8-tetrahydrofolate + NAD(+). The enzyme catalyses uridine(54) in tRNA + (6R)-5,10-methylene-5,6,7,8-tetrahydrofolate + NADPH + H(+) = 5-methyluridine(54) in tRNA + (6S)-5,6,7,8-tetrahydrofolate + NADP(+). Its function is as follows. Catalyzes the folate-dependent formation of 5-methyl-uridine at position 54 (M-5-U54) in all tRNAs. The protein is Methylenetetrahydrofolate--tRNA-(uracil-5-)-methyltransferase TrmFO of Synechococcus sp. (strain JA-3-3Ab) (Cyanobacteria bacterium Yellowstone A-Prime).